Reading from the N-terminus, the 731-residue chain is Alpha-xylosidase (731 aa).

Catalysis depends on residues Asp-353 and Glu-356. Catalysis depends on Asp-428, which acts as the Proton donor.

The protein belongs to the glycosyl hydrolase 31 family. Monomer.

The enzyme catalyses Hydrolysis of terminal, non-reducing alpha-D-xylose residues with release of alpha-D-xylose.. In terms of biological role, catalyzes the liberation of alpha-xylose from the non-reducing terminal glucose of xyloglucan oligosaccharides. Has high hydrolytic activity on the disaccharide isoprimeverose. Follows a retaining mechanism of substrate hydrolysis. This chain is Alpha-xylosidase (xylS), found in Saccharolobus solfataricus (strain ATCC 35092 / DSM 1617 / JCM 11322 / P2) (Sulfolobus solfataricus).